A 275-amino-acid chain; its full sequence is Large ribosomal subunit protein uL2 (275 aa).

The segment at 223-260 (VAMNPVDHPHGGGEGRTSGGRHPVSPWGLPTKGYKTRS) is disordered.

It belongs to the universal ribosomal protein uL2 family. In terms of assembly, part of the 50S ribosomal subunit. Forms a bridge to the 30S subunit in the 70S ribosome.

Functionally, one of the primary rRNA binding proteins. Required for association of the 30S and 50S subunits to form the 70S ribosome, for tRNA binding and peptide bond formation. It has been suggested to have peptidyltransferase activity; this is somewhat controversial. Makes several contacts with the 16S rRNA in the 70S ribosome. The polypeptide is Large ribosomal subunit protein uL2 (Legionella pneumophila (strain Lens)).